The sequence spans 309 residues: Short chain dehydrogenase MYCFIDRAFT_6125 (309 aa).

Residues I43, R67, D88, and R150 each contribute to the NADP(+) site. The active-site Proton donor is S168. Y182, K186, V215, and S217 together coordinate NADP(+). Catalysis depends on Y182, which acts as the Proton acceptor. K186 (lowers pKa of active site Tyr) is an active-site residue.

Belongs to the short-chain dehydrogenases/reductases (SDR) family.

The protein operates within secondary metabolite biosynthesis. Its function is as follows. Short chain dehydrogenase; part of the gene cluster that mediates the biosynthesis of an emodin derivative that may be involved in black Sigatoka disease of banana. The pathway begins with the synthesis of atrochrysone thioester by the polyketide synthase PKS8-1. The atrochrysone carboxyl ACP thioesterase MYCFIDRAFT_190111 then breaks the thioester bond and releases the atrochrysone carboxylic acid from PKS8-1. The decarboxylase MYCFIDRAFT_34057 then catalyzes the concerted decarboxylation-elimination required to convert atochrysone carboxylic acid into emodin anthrone, which is further oxidized to emodin by the anthrone oxygenase MYCFIDRAFT_34418. The functions of the other tailoring enzymes as well as the final product of the cluster have still to be identified. In Pseudocercospora fijiensis (strain CIRAD86) (Black leaf streak disease fungus), this protein is Short chain dehydrogenase MYCFIDRAFT_6125.